Consider the following 327-residue polypeptide: Methionyl-tRNA formyltransferase (327 aa).

A (6S)-5,6,7,8-tetrahydrofolate-binding site is contributed by 121–124 (SLLP).

The protein belongs to the Fmt family.

The catalysed reaction is L-methionyl-tRNA(fMet) + (6R)-10-formyltetrahydrofolate = N-formyl-L-methionyl-tRNA(fMet) + (6S)-5,6,7,8-tetrahydrofolate + H(+). In terms of biological role, attaches a formyl group to the free amino group of methionyl-tRNA(fMet). The formyl group appears to play a dual role in the initiator identity of N-formylmethionyl-tRNA by promoting its recognition by IF2 and preventing the misappropriation of this tRNA by the elongation apparatus. The sequence is that of Methionyl-tRNA formyltransferase from Burkholderia pseudomallei (strain 668).